The sequence spans 519 residues: ATP synthase subunit alpha (519 aa).

175–182 lines the ATP pocket; sequence GDRQTGKT.

The protein belongs to the ATPase alpha/beta chains family. As to quaternary structure, F-type ATPases have 2 components, CF(1) - the catalytic core - and CF(0) - the membrane proton channel. CF(1) has five subunits: alpha(3), beta(3), gamma(1), delta(1), epsilon(1). CF(0) has three main subunits: a(1), b(2) and c(9-12). The alpha and beta chains form an alternating ring which encloses part of the gamma chain. CF(1) is attached to CF(0) by a central stalk formed by the gamma and epsilon chains, while a peripheral stalk is formed by the delta and b chains.

It localises to the cell inner membrane. The catalysed reaction is ATP + H2O + 4 H(+)(in) = ADP + phosphate + 5 H(+)(out). In terms of biological role, produces ATP from ADP in the presence of a proton gradient across the membrane. The alpha chain is a regulatory subunit. The polypeptide is ATP synthase subunit alpha (Acinetobacter baylyi (strain ATCC 33305 / BD413 / ADP1)).